The following is a 202-amino-acid chain: Glycoprotein U22 (202 aa).

An N-terminal signal peptide occupies residues 1-20 (MVPQGCSLVWVSALYVSVIA). Asn-54, Asn-107, Asn-112, and Asn-125 each carry an N-linked (GlcNAc...) asparagine; by host glycan. The chain crosses the membrane as a helical span at residues 172–192 (FVYYCISVYLFAVVVLCSCWF).

The protein resides in the membrane. The protein is Glycoprotein U22 (U22) of Homo sapiens (Human).